The primary structure comprises 340 residues: SH2 domain-containing adapter protein D (340 aa).

Disordered regions lie at residues 1 to 77 (MAKW…PKHR), 94 to 186 (GGPG…QPWE), and 198 to 230 (VQFD…ERVD). The span at 98 to 108 (EELEADTEYLD) shows a compositional bias: acidic residues. Over residues 171–186 (PQEDERPADEYDQPWE) the composition is skewed to basic and acidic residues. Residues 240–335 (WFHGPLNRAD…AEHLALLYPV (96 aa)) form the SH2 domain.

Tyrosine phosphorylated by ABL.

In terms of biological role, may function as an adapter protein. This chain is SH2 domain-containing adapter protein D (SHD), found in Homo sapiens (Human).